Consider the following 289-residue polypeptide: Probable 2-keto-3-deoxyxylonate dehydratase (289 aa).

Positions 144, 146, and 164 each coordinate Mg(2+).

Belongs to the FAH family.

The catalysed reaction is 2-dehydro-3-deoxy-D-arabinonate = 2,5-dioxopentanoate + H2O. It functions in the pathway carbohydrate metabolism; D-xylose degradation. Functionally, probable 2-keto-3-deoxyxylonate dehydratase involved in the degradation of D-xylose, a major component of hemicelluloses such as xylan. Catalyzes the fourth reaction in the xylose utilization pathway through dehydratation of 2-dehydro-3-deoxy-D-xylonate into alpha-ketoglutarate semialdehyde (2,5-dioxopentanoate). The sequence is that of Probable 2-keto-3-deoxyxylonate dehydratase from Haloferax volcanii (strain ATCC 29605 / DSM 3757 / JCM 8879 / NBRC 14742 / NCIMB 2012 / VKM B-1768 / DS2) (Halobacterium volcanii).